The sequence spans 291 residues: Trimeric intracellular cation channel type B (291 aa).

At 1-15 the chain is on the lumenal side; sequence MESPWNELTLAFSRT. The helical transmembrane segment at 16–33 threads the bilayer; that stretch reads SMFPFFDIAHYLVSVMAL. Residues 34–47 are Cytoplasmic-facing; the sequence is KHQPGAAALAWKNP. A helical transmembrane segment spans residues 48 to 69; that stretch reads LSSWFTAMLHCFGGGILSCVLL. Residues 70–80 are Lumenal-facing; the sequence is AEPPLRFLANN. The helical transmembrane segment at 81-100 threads the bilayer; it reads TNILLASSIWYIAFFCPCDL. The Cytoplasmic segment spans residues 101–103; sequence ISQ. Residues 104-122 traverse the membrane as a helical segment; the sequence is AYSFLPVQLLAAGMKEVTR. The a 1,2-diacyl-sn-glycero-3-phospho-(1D-myo-inositol-4,5-bisphosphate) site is built by lysine 118 and arginine 122. The Lumenal portion of the chain corresponds to 123–138; that stretch reads TWKIVGGVTHANSYYK. Residues 139–156 form a helical membrane-spanning segment; it reads NGWIVMIAVGWARGAGGS. At 157–179 the chain is on the cytoplasmic side; the sequence is IITNFEQLVKGCWKPEAEEWLKM. A helical membrane pass occupies residues 180–196; it reads SYPAKVTLLGSVIFTFQ. Over 197–207 the chain is Lumenal; it reads QTKYLAISKHN. The chain crosses the membrane as a helical span at residues 208–225; that stretch reads LMFLFTVFLVATKITMMI. Topologically, residues 226-291 are cytoplasmic; it reads TKTALVPFAC…VKKKHSKKTE (66 aa). The interval 257–291 is disordered; sequence KSETKSSFNGTGSSTSKPVANASDKVKKKHSKKTE. Over residues 261–274 the composition is skewed to polar residues; sequence KSSFNGTGSSTSKP. Serine 262 bears the Phosphoserine mark. A compositionally biased stretch (basic residues) spans 282–291; the sequence is VKKKHSKKTE.

This sequence belongs to the TMEM38 family. Homotrimer; conformation seems to be controled by binding to diacylglycerol (DAG).

The protein resides in the endoplasmic reticulum membrane. The catalysed reaction is K(+)(in) = K(+)(out). With respect to regulation, channel activity is activated by increased cytosolic Ca(2+) levels and blocked by luminal high Ca(2+) levels. Functionally, intracellular monovalent cation channel required for maintenance of rapid intracellular calcium release. Acts as a potassium counter-ion channel that functions in synchronization with calcium release from intracellular stores. Activated by increased cytosolic Ca(2+) levels. The protein is Trimeric intracellular cation channel type B (TMEM38B) of Bos taurus (Bovine).